Here is a 471-residue protein sequence, read N- to C-terminus: Elongation factor 1-alpha (471 aa).

The tr-type G domain maps to 10–239; that stretch reads KPRLNACFIG…EALNYQDVPE (230 aa). The interval 19-26 is G1; the sequence is GHVDSGKS. Position 19 to 26 (19 to 26) interacts with GTP; sequence GHVDSGKS. Residues 75–79 are G2; it reads GITIT. A G3 region spans residues 96–99; that stretch reads DCPG. GTP contacts are provided by residues 96–100 and 156–159; these read DCPGH and NKMD. The interval 156–159 is G4; that stretch reads NKMD. A G5 region spans residues 196 to 198; the sequence is SAF.

Belongs to the TRAFAC class translation factor GTPase superfamily. Classic translation factor GTPase family. EF-Tu/EF-1A subfamily. In terms of assembly, component of the eukaryotic elongation factor 1 complex (eEF1).

The protein resides in the cytoplasm. It functions in the pathway protein biosynthesis; polypeptide chain elongation. In terms of biological role, GTP-binding component of the eukaryotic elongation factor 1 complex (eEF1). In its active GTP-bound form, binds to and delivers aminoacyl-tRNA to the A-site of ribosomes during protein biosynthesis. In the presence of a correct codon-anticodon match between the aminoacyl-tRNA and the A-site codon of the ribosome-bound mRNA, the ribosome acts as a GTPase activator and the GTP is hydrolyzed. The inactive GDP-bound form leaves the ribosome and must be recycled by its guanine nucleotide exchange factor (GEF) (eEF1B subcomplex) before binding another molecule of aminoacyl-tRNA. Required for nuclear export of aminoacyl-tRNAs. May also be involved in translational quality control by targeting cotranslationally damaged proteins to the proteasome. The chain is Elongation factor 1-alpha (TEF1) from Encephalitozoon cuniculi (strain GB-M1) (Microsporidian parasite).